Here is a 153-residue protein sequence, read N- to C-terminus: Troponin C (153 aa).

Alanine 1 is modified (blocked amino end (Ala)). EF-hand domains lie at 10 to 45, 46 to 81, 86 to 121, and 122 to 153; these read EQVQ…LGQT, FEEK…FLVE, AMQE…LDDK, and LTED…MMTG. Ca(2+) contacts are provided by aspartate 59, aspartate 61, serine 63, glutamate 65, glutamate 70, aspartate 99, aspartate 110, aspartate 135, aspartate 137, serine 139, threonine 141, and glutamate 146.

It belongs to the troponin C family.

Its function is as follows. Troponin is the central regulatory protein of striated muscle contraction. Tn consists of three components: Tn-I which is the inhibitor of actomyosin ATPase, Tn-T which contains the binding site for tropomyosin and Tn-C. The binding of calcium to Tn-C abolishes the inhibitory action of Tn on actin filaments. The protein is Troponin C of Tachypleus tridentatus (Japanese horseshoe crab).